We begin with the raw amino-acid sequence, 146 residues long: Large ribosomal subunit protein uL15 (146 aa).

The disordered stretch occupies residues 1-51 (MKLHELQPAAGSRKVRNRVGRGTSSGNGKTAGRGQKGQKARSGGGVRLGFE). 2 stretches are compositionally biased toward gly residues: residues 23–35 (TSSG…GRGQ) and 42–51 (SGGGVRLGFE).

The protein belongs to the universal ribosomal protein uL15 family. As to quaternary structure, part of the 50S ribosomal subunit.

In terms of biological role, binds to the 23S rRNA. This chain is Large ribosomal subunit protein uL15, found in Streptococcus gordonii (strain Challis / ATCC 35105 / BCRC 15272 / CH1 / DL1 / V288).